The following is a 165-amino-acid chain: uncharacterized protein (165 aa).

Residues 28–139 form the Cupin type-1 domain; that stretch reads QNALKDTGLA…KPNEREEAVK (112 aa).

This is an uncharacterized protein from Bacillus subtilis (strain 168).